A 308-amino-acid polypeptide reads, in one-letter code: MISPAQDPYASRTDRSSAIIARQDPVVYGEGKFADALSADQVQSYERDGFLLLENLFSDEEVAALLAEVERMTRDPAIVRREEAITEPGSNAVRSIFMVHVLSPILGRLVRDPRLANAARQILGSEVYVHQSRANMKPGFKGKEFYWHSDFETWHVEDGMPSMRALSCSVLLTDNNETNGPLMLVPGSHRQFISCVGETPRDHYKQSLKKQEYGVPDPVSLQLLAEQGGISTMTGKAGSVVFFDCNTMHGSNSNISPWPRANVFMVYNSMENTLNPPKYGLNPRPEHIATRQAFKAVRPLDSLKLVER.

L-ectoine is bound at residue glutamine 131. Residue lysine 137 coordinates 2-oxoglutarate. Fe cation is bound by residues histidine 148, aspartate 150, and histidine 249.

This sequence belongs to the PhyH family. EctD subfamily. In terms of assembly, homodimer. Fe(2+) serves as cofactor.

It catalyses the reaction L-ectoine + 2-oxoglutarate + O2 = 5-hydroxyectoine + succinate + CO2. In terms of biological role, involved in the biosynthesis of 5-hydroxyectoine, called compatible solute, which helps organisms to survive extreme osmotic stress by acting as a highly soluble organic osmolyte. Catalyzes the 2-oxoglutarate-dependent selective hydroxylation of L-ectoine to yield (4S,5S)-5-hydroxyectoine. In Bordetella bronchiseptica (strain ATCC BAA-588 / NCTC 13252 / RB50) (Alcaligenes bronchisepticus), this protein is Ectoine dioxygenase.